Consider the following 186-residue polypeptide: MGSLFGRVAALRALLCGPRFQCLLVRPSSGGPPWPQERTLVAVKPDGVQRRLVGTVIQRFERRGFKLVGMKMLQAPESILAEHYRDLQRKPFYPALISYMSSGPVVAMVWEGPNVVHISRAMIGHTDSTEAAPGTIRGDFSVHISRNVIHASDSVDGAQREIELWFQSSELLNWADGGHHSSCYPA.

Residues 1 to 32 (MGSLFGRVAALRALLCGPRFQCLLVRPSSGGP) constitute a mitochondrion transit peptide. ATP contacts are provided by Lys-44, Phe-92, Arg-120, Thr-126, Arg-137, and Asn-147. His-150 (pros-phosphohistidine intermediate) is an active-site residue.

Belongs to the NDK family. In terms of assembly, homohexamer. Interacts with OPA1. Interacts with CAPN8. It depends on Mg(2+) as a cofactor. In terms of tissue distribution, expressed in the base region of the oxyntic and pyloric mucosae.

The protein resides in the mitochondrion intermembrane space. It is found in the mitochondrion matrix. The enzyme catalyses a 2'-deoxyribonucleoside 5'-diphosphate + ATP = a 2'-deoxyribonucleoside 5'-triphosphate + ADP. It carries out the reaction a ribonucleoside 5'-diphosphate + ATP = a ribonucleoside 5'-triphosphate + ADP. In terms of biological role, major role in the synthesis of nucleoside triphosphates other than ATP. The ATP gamma phosphate is transferred to the NDP beta phosphate via a ping-pong mechanism, using a phosphorylated active-site intermediate. Through the catalyzed exchange of gamma-phosphate between di- and triphosphonucleosides participates in regulation of intracellular nucleotide homeostasis. Binds to anionic phospholipids, predominantly to cardiolipin; the binding inhibits its phosphotransfer activity. Acts as a mitochondria-specific NDK; its association with cardiolipin-containing mitochondrial inner membrane is coupled to respiration suggesting that ADP locally regenerated in the mitochondrion innermembrane space by its activity is directly taken up via ANT ADP/ATP translocase into the matrix space to stimulate respiratory ATP regeneration. Proposed to increase GTP-loading on dynamin-related GTPase OPA1 in mitochondria. In vitro can induce liposome cross-linking suggesting that it can cross-link inner and outer membranes to form contact sites, and promotes intermembrane migration of anionic phosphoplipids. Promotes the redistribution of cardiolipin between the mitochondrial inner membrane and outer membrane which is implicated in pro-apoptotic signaling. This chain is Nucleoside diphosphate kinase, mitochondrial (Nme4), found in Mus musculus (Mouse).